Here is a 266-residue protein sequence, read N- to C-terminus: Glutamate racemase (266 aa).

Substrate contacts are provided by residues 10-11 and 42-43; these read DS and YG. Catalysis depends on Cys73, which acts as the Proton donor/acceptor. 74–75 is a binding site for substrate; sequence NT. Cys183 acts as the Proton donor/acceptor in catalysis. Position 184–185 (184–185) interacts with substrate; it reads TH.

This sequence belongs to the aspartate/glutamate racemases family.

The enzyme catalyses L-glutamate = D-glutamate. Its pathway is cell wall biogenesis; peptidoglycan biosynthesis. Its function is as follows. Provides the (R)-glutamate required for cell wall biosynthesis. The protein is Glutamate racemase of Lactobacillus johnsonii (strain CNCM I-12250 / La1 / NCC 533).